The primary structure comprises 102 residues: Omega-hexatoxin-Hi2a (102 aa).

The N-terminal stretch at 1 to 23 (MKFSKLSLTLALILTQALLVVCG) is a signal peptide. Positions 24-56 (KINEDFMENGLESHALHDEIRKPIDTEKADAER) are excised as a propeptide. 3 cysteine pairs are disulfide-bonded: Cys-61-Cys-75, Cys-68-Cys-81, and Cys-74-Cys-86. Leu-98 bears the Leucine amide mark. Residues 100-102 (RAL) constitute a propeptide that is removed on maturation.

It belongs to the neurotoxin 15 family. 02 (omega-actx) subfamily. In terms of tissue distribution, expressed by the venom gland.

Its subcellular location is the secreted. Functionally, potent inhibitor of insect, but not mammalian, voltage-gated calcium channels (Cav). The polypeptide is Omega-hexatoxin-Hi2a (Hadronyche infensa (Fraser island funnel-web spider)).